The primary structure comprises 343 residues: Methionine import ATP-binding protein MetN 1 (343 aa).

The 240-residue stretch at 2 to 241 folds into the ABC transporter domain; that stretch reads IKLSNITKVF…PKTPLAQKFI (240 aa). 38–45 is an ATP binding site; that stretch reads GASGAGKS.

This sequence belongs to the ABC transporter superfamily. Methionine importer (TC 3.A.1.24) family. The complex is composed of two ATP-binding proteins (MetN), two transmembrane proteins (MetI) and a solute-binding protein (MetQ).

Its subcellular location is the cell inner membrane. The enzyme catalyses L-methionine(out) + ATP + H2O = L-methionine(in) + ADP + phosphate + H(+). It carries out the reaction D-methionine(out) + ATP + H2O = D-methionine(in) + ADP + phosphate + H(+). In terms of biological role, part of the ABC transporter complex MetNIQ involved in methionine import. Responsible for energy coupling to the transport system. The polypeptide is Methionine import ATP-binding protein MetN 1 (Salmonella paratyphi A (strain ATCC 9150 / SARB42)).